The sequence spans 321 residues: Glucokinase (321 aa).

8-13 (GDVGGT) is a binding site for ATP.

Belongs to the bacterial glucokinase family.

It is found in the cytoplasm. The enzyme catalyses D-glucose + ATP = D-glucose 6-phosphate + ADP + H(+). This chain is Glucokinase, found in Escherichia coli O127:H6 (strain E2348/69 / EPEC).